A 1861-amino-acid chain; its full sequence is Polyketide synthase 2 (1861 aa).

The Ketosynthase family 3 (KS3) domain occupies 109–525 (DSKIAIIGMS…GGNSALLLED (417 aa)). Residues cysteine 264, histidine 399, and histidine 441 each act as for beta-ketoacyl synthase activity in the active site. The tract at residues 626-931 (GFVFSGQGAQ…PSLHRKDDGW (306 aa)) is malonyl-CoA:ACP transacylase (MAT) domain. Catalysis depends on serine 716, which acts as the For acyl/malonyl transferase activity. The tract at residues 1008–1312 (TSSVQKVIQQ…VFGGMTVLPP (305 aa)) is product template (PT) domain. The N-terminal hotdog fold stretch occupies residues 1012–1146 (QKVIQQTDGP…CILRFADPKS (135 aa)). One can recognise a PKS/mFAS DH domain in the interval 1012-1318 (QKVIQQTDGP…VLPPRRGADA (307 aa)). Histidine 1045 serves as the catalytic Proton acceptor; for dehydratase activity. A C-terminal hotdog fold region spans residues 1174–1318 (DSLLSKGIVY…VLPPRRGADA (145 aa)). The active-site Proton donor; for dehydratase activity is the aspartate 1232. In terms of domain architecture, Carrier 1 spans 1356–1433 (SPQSGAIHRI…ELRLFLAADQ (78 aa)). Position 1393 is an O-(pantetheine 4'-phosphoryl)serine (serine 1393). The segment at 1441–1470 (CESSNGQHTPQTSDKGSGTLTAQKPDHDTD) is disordered. Residues 1442–1462 (ESSNGQHTPQTSDKGSGTLTA) are compositionally biased toward polar residues. A Carrier 2 domain is found at 1472–1546 (EMTLNRVCAI…SLQKTLRGTE (75 aa)). Serine 1506 is modified (O-(pantetheine 4'-phosphoryl)serine). The interval 1582 to 1855 (ASAPHATSIL…IIEMSNLIGD (274 aa)) is thioesterase (TE) domain. Serine 1685 functions as the For thioesterase activity in the catalytic mechanism.

Its function is as follows. Polyketide synthase; part of the Pks2 gene cluster that mediates the formation of infectious structures (appressoria), enabling these fungi to kill insects faster. The product of the Pks2 gene cluster is different from the one of Pks1 and has still not been identified. This is Polyketide synthase 2 from Metarhizium acridum (strain CQMa 102).